The primary structure comprises 176 residues: ATP-dependent protease subunit HslV (176 aa).

Residue Thr-2 is part of the active site. Na(+) is bound by residues Gly-157, Cys-160, and Thr-163.

This sequence belongs to the peptidase T1B family. HslV subfamily. A double ring-shaped homohexamer of HslV is capped on each side by a ring-shaped HslU homohexamer. The assembly of the HslU/HslV complex is dependent on binding of ATP.

The protein localises to the cytoplasm. It carries out the reaction ATP-dependent cleavage of peptide bonds with broad specificity.. Allosterically activated by HslU binding. Functionally, protease subunit of a proteasome-like degradation complex believed to be a general protein degrading machinery. This chain is ATP-dependent protease subunit HslV, found in Pseudomonas fluorescens (strain SBW25).